An 87-amino-acid polypeptide reads, in one-letter code: Small ribosomal subunit protein bS20 (87 aa).

Basic residues predominate over residues Met-1–Ala-11. Positions Met-1–Met-27 are disordered.

The protein belongs to the bacterial ribosomal protein bS20 family.

Binds directly to 16S ribosomal RNA. The chain is Small ribosomal subunit protein bS20 from Actinobacillus succinogenes (strain ATCC 55618 / DSM 22257 / CCUG 43843 / 130Z).